The following is a 366-amino-acid chain: Outer membrane porin C 2 (366 aa).

Positions 1–21 (MKLKIVAVVVTGLLAANVAHA) are cleaved as a signal peptide.

It belongs to the Gram-negative porin family. Homotrimer. Forms mixed heterotrimers with OmpF and with PhoE; other mixed heterotrimers are also probable.

The protein localises to the cell outer membrane. Forms pores that allow passive diffusion of small molecules across the outer membrane. Plays a role in virulence. In Shigella flexneri serotype 5a (strain M90T), this protein is Outer membrane porin C 2.